We begin with the raw amino-acid sequence, 236 residues long: 15,16-dihydrobiliverdin:ferredoxin oxidoreductase (236 aa).

Belongs to the HY2 family.

It catalyses the reaction 15,16-dihydrobiliverdin + oxidized 2[4Fe-4S]-[ferredoxin] = biliverdin IXalpha + reduced 2[4Fe-4S]-[ferredoxin] + 2 H(+). Functionally, catalyzes the two-electron reduction of biliverdin IX-alpha at the C15 methine bridge. This Synechococcus sp. (strain WH8020) protein is 15,16-dihydrobiliverdin:ferredoxin oxidoreductase (pebA).